The following is a 762-amino-acid chain: 5-methyltetrahydropteroyltriglutamate--homocysteine methyltransferase (762 aa).

5-methyltetrahydropteroyltri-L-glutamate is bound by residues Arg-18–Lys-21 and Lys-112. Residues Ile-435–Ser-437 and Glu-488 each bind L-homocysteine. L-methionine contacts are provided by residues Ile-435–Ser-437 and Glu-488. 5-methyltetrahydropteroyltri-L-glutamate-binding positions include Arg-519–Cys-520 and Trp-565. Position 603 (Asp-603) interacts with L-homocysteine. Residue Asp-603 participates in L-methionine binding. Glu-609 contacts 5-methyltetrahydropteroyltri-L-glutamate. Residues His-645, Cys-647, and Glu-669 each coordinate Zn(2+). Catalysis depends on His-698, which acts as the Proton donor. Cys-730 contributes to the Zn(2+) binding site.

This sequence belongs to the vitamin-B12 independent methionine synthase family. The cofactor is Zn(2+).

It carries out the reaction 5-methyltetrahydropteroyltri-L-glutamate + L-homocysteine = tetrahydropteroyltri-L-glutamate + L-methionine. Its pathway is amino-acid biosynthesis; L-methionine biosynthesis via de novo pathway; L-methionine from L-homocysteine (MetE route): step 1/1. Its function is as follows. Catalyzes the transfer of a methyl group from 5-methyltetrahydrofolate to homocysteine resulting in methionine formation. The sequence is that of 5-methyltetrahydropteroyltriglutamate--homocysteine methyltransferase from Bacillus licheniformis (strain ATCC 14580 / DSM 13 / JCM 2505 / CCUG 7422 / NBRC 12200 / NCIMB 9375 / NCTC 10341 / NRRL NRS-1264 / Gibson 46).